A 496-amino-acid polypeptide reads, in one-letter code: Cytochrome P450 71D179 (496 aa).

A helical; Signal-anchor for type II membrane protein transmembrane segment spans residues 1-21 (MDISISWVVIIVSVLSYLILM). Cysteine 435 is a heme binding site.

It belongs to the cytochrome P450 family. Heme serves as cofactor.

It localises to the membrane. It functions in the pathway secondary metabolite biosynthesis; terpenoid biosynthesis. Its function is as follows. Involved in the biosynthesis of phenolic monoterpenes natural products thymol and carvacrol which have a broad range of biological activities acting as antimicrobial compounds, insecticides, antioxidants and pharmaceutical agents. Catalyzes probably the C3-hydroxylation of gamma-terpinene to produce thymol. The protein is Cytochrome P450 71D179 of Thymus vulgaris (Thyme).